The sequence spans 398 residues: Tyrosine--tRNA ligase (398 aa).

The 'HIGH' region motif lies at 42–51; that stretch reads PTAPDIHLGH. Positions 226 to 230 match the 'KMSKS' region motif; it reads KMSKS. K229 provides a ligand contact to ATP. The S4 RNA-binding domain maps to 336–397; that stretch reads LAIANLLKDA…GKRKFAKVTL (62 aa).

It belongs to the class-I aminoacyl-tRNA synthetase family. TyrS type 2 subfamily. As to quaternary structure, homodimer.

Its subcellular location is the cytoplasm. The catalysed reaction is tRNA(Tyr) + L-tyrosine + ATP = L-tyrosyl-tRNA(Tyr) + AMP + diphosphate + H(+). Catalyzes the attachment of tyrosine to tRNA(Tyr) in a two-step reaction: tyrosine is first activated by ATP to form Tyr-AMP and then transferred to the acceptor end of tRNA(Tyr). The protein is Tyrosine--tRNA ligase of Shewanella oneidensis (strain ATCC 700550 / JCM 31522 / CIP 106686 / LMG 19005 / NCIMB 14063 / MR-1).